The chain runs to 114 residues: Small ribosomal subunit protein uS17 (114 aa).

The protein belongs to the universal ribosomal protein uS17 family. In terms of assembly, part of the 30S ribosomal subunit.

In terms of biological role, one of the primary rRNA binding proteins, it binds specifically to the 5'-end of 16S ribosomal RNA. This chain is Small ribosomal subunit protein uS17, found in Sulfolobus acidocaldarius (strain ATCC 33909 / DSM 639 / JCM 8929 / NBRC 15157 / NCIMB 11770).